Reading from the N-terminus, the 429-residue chain is Ribosomal RNA small subunit methyltransferase B (429 aa).

S-adenosyl-L-methionine-binding positions include 254-260 (CAAPGGK), Asp277, Asp303, and Asp322. Cys375 serves as the catalytic Nucleophile. A disordered region spans residues 397–419 (ALSETGTPDQPGQQNLPGGEEGD). Residues 400 to 412 (ETGTPDQPGQQNL) show a composition bias toward polar residues.

The protein belongs to the class I-like SAM-binding methyltransferase superfamily. RsmB/NOP family.

It is found in the cytoplasm. It carries out the reaction cytidine(967) in 16S rRNA + S-adenosyl-L-methionine = 5-methylcytidine(967) in 16S rRNA + S-adenosyl-L-homocysteine + H(+). Its function is as follows. Specifically methylates the cytosine at position 967 (m5C967) of 16S rRNA. The polypeptide is Ribosomal RNA small subunit methyltransferase B (Salmonella typhi).